The chain runs to 341 residues: Paired box protein Pax-9 (341 aa).

Residues 4–130 constitute a DNA-binding region (paired); it reads AFGEVNQLGG…SSISRILRNK (127 aa). The tract at residues 7 to 63 is PAI subdomain; the sequence is EVNQLGGVFVNGRPLPNAIRLRIVELAQLGIRPCDISRQLRVSHGCVSKILARYNET. The tract at residues 82–130 is RED subdomain; sequence TVVKHIRTYKQRDPGIFAWEIRDRLLADGVCDKYNVPSVSSISRILRNK. The interaction with KDM5B stretch occupies residues 168–189; the sequence is AAAAKVPTPPGVPAIPGSVAMP.

As to quaternary structure, interacts with KDM5B.

Its subcellular location is the nucleus. Functionally, transcription factor required for normal development of thymus, parathyroid glands, ultimobranchial bodies, teeth, skeletal elements of skull and larynx as well as distal limbs. In Daubentonia madagascariensis (Aye-aye), this protein is Paired box protein Pax-9 (PAX9).